Consider the following 330-residue polypeptide: Phenylalanine--tRNA ligase alpha subunit (330 aa).

Residue glutamate 246 coordinates Mg(2+).

It belongs to the class-II aminoacyl-tRNA synthetase family. Phe-tRNA synthetase alpha subunit type 1 subfamily. As to quaternary structure, tetramer of two alpha and two beta subunits. Mg(2+) is required as a cofactor.

The protein localises to the cytoplasm. It carries out the reaction tRNA(Phe) + L-phenylalanine + ATP = L-phenylalanyl-tRNA(Phe) + AMP + diphosphate + H(+). The sequence is that of Phenylalanine--tRNA ligase alpha subunit from Sulfurovum sp. (strain NBC37-1).